Here is a 301-residue protein sequence, read N- to C-terminus: Homeobox protein knotted-1-like 1 (301 aa).

The interval 141 to 170 is disordered; it reads CSGATSPPATTATHSDEMVGSSDEDQCSGE. Residues 144–153 are compositionally biased toward low complexity; the sequence is ATSPPATTAT. In terms of domain architecture, ELK spans 188-208; it reads ELKEMLLKKYSGCLSRLRSEF. Positions 209–272 form a DNA-binding region, homeobox; TALE-type; it reads LKKRKKGKLP…NQRKRHWKPS (64 aa).

Belongs to the TALE/KNOX homeobox family.

The protein resides in the nucleus. Its function is as follows. Probable transcription factor that may be involved in shoot formation during early embryogenesis. The protein is Homeobox protein knotted-1-like 1 (OSH6) of Oryza sativa subsp. japonica (Rice).